The sequence spans 262 residues: MRYQNMFETLKKQDKMAFIPFVTLGDPNYEWSFEIIKTLIDSGVSALELGFAFSDPVADGVTIQASHLRALKHASMAKNFQLLRALRDYNPHIPIGLLAYANLIFSYGVDGFYAQIKECGVDSVLIADMPLIEKELVIKSAQKHQIKQIFIASPNASVKDLEQVATHSQGYIYTLARSGVTGASHTLKNDASAIIKTLKTFSSTPALLGFGISKKEHITNAKGMGADGVICGSALVKIIEENLNNENAMLEKIKGFIGGMIF.

Active-site proton acceptor residues include glutamate 48 and aspartate 59.

It belongs to the TrpA family. As to quaternary structure, tetramer of two alpha and two beta chains.

The enzyme catalyses (1S,2R)-1-C-(indol-3-yl)glycerol 3-phosphate + L-serine = D-glyceraldehyde 3-phosphate + L-tryptophan + H2O. Its pathway is amino-acid biosynthesis; L-tryptophan biosynthesis; L-tryptophan from chorismate: step 5/5. The alpha subunit is responsible for the aldol cleavage of indoleglycerol phosphate to indole and glyceraldehyde 3-phosphate. This is Tryptophan synthase alpha chain from Helicobacter pylori (strain HPAG1).